A 190-amino-acid chain; its full sequence is Glutathione peroxidase 2 (190 aa).

The active site involves U40. Residue U40 is a non-standard amino acid, selenocysteine.

The protein belongs to the glutathione peroxidase family. Homotetramer.

The protein localises to the cytoplasm. It localises to the cytosol. It carries out the reaction 2 glutathione + H2O2 = glutathione disulfide + 2 H2O. It catalyses the reaction a hydroperoxy polyunsaturated fatty acid + 2 glutathione = a hydroxy polyunsaturated fatty acid + glutathione disulfide + H2O. The enzyme catalyses tert-butyl hydroperoxide + 2 glutathione = tert-butanol + glutathione disulfide + H2O. The catalysed reaction is cumene hydroperoxide + 2 glutathione = 2-phenylpropan-2-ol + glutathione disulfide + H2O. It carries out the reaction (13S)-hydroperoxy-(9Z,11E)-octadecadienoate + 2 glutathione = (13S)-hydroxy-(9Z,11E)-octadecadienoate + glutathione disulfide + H2O. It catalyses the reaction (5S)-hydroperoxy-(6E,8Z,11Z,14Z)-eicosatetraenoate + 2 glutathione = (5S)-hydroxy-(6E,8Z,11Z,14Z)-eicosatetraenoate + glutathione disulfide + H2O. The enzyme catalyses (12R)-hydroperoxy-(5Z,8Z,10E,14Z)-eicosatetraenoate + 2 glutathione = (12R)-hydroxy-(5Z,8Z,10E,14Z)-eicosatetraenoate + glutathione disulfide + H2O. The catalysed reaction is (15S)-hydroperoxy-(5Z,8Z,11Z,13E)-eicosatetraenoate + 2 glutathione = (15S)-hydroxy-(5Z,8Z,11Z,13E)-eicosatetraenoate + glutathione disulfide + H2O. Catalyzes the reduction of hydroperoxides in a glutathione-dependent manner thus regulating cellular redox homeostasis. Can reduce small soluble hydroperoxides such as H2O2, cumene hydroperoxide and tert-butyl hydroperoxide, as well as several fatty acid-derived hydroperoxides. Cannot reduce phosphatidycholine hydroperoxide. This Pongo pygmaeus (Bornean orangutan) protein is Glutathione peroxidase 2 (GPX2).